The sequence spans 860 residues: MTEYTPMIKQYLEIKDKYQDAFLFFRLGDFYEMFFEDALNASQILEITLTGREGGTKEKIPMCGVPYHSASGYIDTLIEKGYKVAICEQVEDPKTTKGMVKREVVQLISPGTVMDERGLKAKENNYIASLYCYEGKEYGFAYSDLSTGELKSTVIEASEDRLINELTTLSTRELIVSESEKEVLSDVMKEQLGLTFSVHEEDTIPAENEKLVTRHMSLSEKRAIGKLLHYLKETQKRDLGHLQQAIHYETSNYMKMDYYSKRNLELAESIRGKGRQGTLLWLLDNTQTAMGGRMLKQWIDRPLIDRKQIIERQDDVSELMAHFFERLELVENLKNVYDLERLAGRVAYGNVNARDLIQLRNSLYQIPRIRATLLSMNSKSLTALANQLDPCEELTEKLEEAIVDSAPISIREGGIIKDGYNSQLDTYRDASRNGKTWIAELERKERELTGIKTMKVGFNRVFGYYIEVTRANTHLLPEGRYERKQTLANAERYITPELKEKEKLILDAEEKSMELEYQLFTEVREMVKDYIERLQKLAKSVSEIDCLQSFADISEKNHFIRPTLSEDGSLHVKQGRHPVVEKVMGAQSYVANDCDLDQNREILLITGPNMSGKSTYMRQVALTAICAQVGCFVPAEEATLPIFDQIFTRIGAADDLIAGQSTFMVEMLEARNAIVHATKDSLILFDEIGRGTATYDGMALAQAIIEYIHENVHAKTLFSTHYHELTDLEKELRGLQNIHVSAVEENGKVVFLHKIKEGPADKSYGIHVAELAELPKSLIERASRILEQLESNDKKIIITQDKQPEEIHEEVQLSMFPVEPEEKASSKETKLLKEIAAMNIMQMTPMDAMNKLYELQSKIH.

607-614 (GPNMSGKS) is an ATP binding site.

This sequence belongs to the DNA mismatch repair MutS family.

This protein is involved in the repair of mismatches in DNA. It is possible that it carries out the mismatch recognition step. This protein has a weak ATPase activity. The sequence is that of DNA mismatch repair protein MutS from Listeria innocua serovar 6a (strain ATCC BAA-680 / CLIP 11262).